We begin with the raw amino-acid sequence, 993 residues long: ATP-dependent DNA helicase MPH1 (993 aa).

Residues I94–K261 enclose the Helicase ATP-binding domain. I107–T114 contacts ATP. Residues D209–H212 carry the DEAH box motif. Residues K507 to I655 form the Helicase C-terminal domain. Residues N530–M551 are disordered. Polar residues predominate over residues R539–M551. An FKH1-binding region region spans residues L751 to E810. T776 and T785 each carry phosphothreonine.

The protein belongs to the DEAD box helicase family. DEAH subfamily. FANCM sub-subfamily. In terms of assembly, interacts with the MHF histone-fold complex composed of MHF1 and MHF2 to form the FANCM-MHF complex. Interacts with FHK1. Post-translationally, phosphorylation at both Thr-776 and Thr-785 is required for the interaction with FKH1.

The protein resides in the nucleus. The enzyme catalyses ATP + H2O = ADP + phosphate + H(+). Functionally, ATP-dependent DNA helicase involved in DNA damage repair by homologous recombination and in genome maintenance. Capable of unwinding D-loops. Plays a role in limiting crossover recombinants during mitotic DNA double-strand break (DSB) repair. Prevents crossovers between ectopic sequences by removing substrates for MUS81-MMS4 or RAD1-RAD10 cleavage. Component of a FANCM-MHF complex which promotes gene conversion at blocked replication forks, probably by reversal of the stalled fork. Binds to flap-structured DNA but not to non-flap nicked DNA, and participates in Okazaki fragment processing by stimulating the endonuclease activities of FEN1 and DNA2. Involved in recombination donor preference during mating-type switching via interaction with FKH1. The chain is ATP-dependent DNA helicase MPH1 from Saccharomyces cerevisiae (strain ATCC 204508 / S288c) (Baker's yeast).